We begin with the raw amino-acid sequence, 377 residues long: tRNA 2-selenouridine synthase (377 aa).

A Rhodanese domain is found at 18–141; that stretch reads ITRGVTLIDV…LRQEAMDATD (124 aa). C101 functions as the S-selanylcysteine intermediate in the catalytic mechanism.

The protein belongs to the SelU family. Monomer.

It carries out the reaction 5-methylaminomethyl-2-thiouridine(34) in tRNA + selenophosphate + (2E)-geranyl diphosphate + H2O + H(+) = 5-methylaminomethyl-2-selenouridine(34) in tRNA + (2E)-thiogeraniol + phosphate + diphosphate. It catalyses the reaction 5-methylaminomethyl-2-thiouridine(34) in tRNA + (2E)-geranyl diphosphate = 5-methylaminomethyl-S-(2E)-geranyl-thiouridine(34) in tRNA + diphosphate. The catalysed reaction is 5-methylaminomethyl-S-(2E)-geranyl-thiouridine(34) in tRNA + selenophosphate + H(+) = 5-methylaminomethyl-2-(Se-phospho)selenouridine(34) in tRNA + (2E)-thiogeraniol. The enzyme catalyses 5-methylaminomethyl-2-(Se-phospho)selenouridine(34) in tRNA + H2O = 5-methylaminomethyl-2-selenouridine(34) in tRNA + phosphate. In terms of biological role, involved in the post-transcriptional modification of the uridine at the wobble position (U34) of tRNA(Lys), tRNA(Glu) and tRNA(Gln). Catalyzes the conversion of 2-thiouridine (S2U-RNA) to 2-selenouridine (Se2U-RNA). Acts in a two-step process involving geranylation of 2-thiouridine (S2U) to S-geranyl-2-thiouridine (geS2U) and subsequent selenation of the latter derivative to 2-selenouridine (Se2U) in the tRNA chain. The sequence is that of tRNA 2-selenouridine synthase from Cronobacter sakazakii (strain ATCC BAA-894) (Enterobacter sakazakii).